We begin with the raw amino-acid sequence, 411 residues long: Kelch domain-containing protein 10 (411 aa).

6 Kelch repeats span residues Asn72–His133, Leu135–Gly186, Phe187–Gln239, Arg240–His288, Glu296–Pro342, and Cys345–His388.

It belongs to the KLHDC10 family. As to quaternary structure, component of a CRL2 E3 ubiquitin-protein ligase complex, also named ECS (Elongin BC-CUL2/5-SOCS-box protein) complex, composed of CUL2, Elongin BC (ELOB and ELOC), RBX1 and substrate-specific adapter KLHDC10.

It participates in protein modification; protein ubiquitination. Substrate-recognition component of a Cul2-RING (CRL2) E3 ubiquitin-protein ligase complex of the DesCEND (destruction via C-end degrons) pathway, which recognizes a C-degron located at the extreme C terminus of target proteins, leading to their ubiquitination and degradation. The C-degron recognized by the DesCEND pathway is usually a motif of less than ten residues and can be present in full-length proteins, truncated proteins or proteolytically cleaved forms. The CRL2(KLHDC10) complex specifically recognizes proteins with a proline-glycine (Pro-Gly) or an alanine tail (CAT tail) at the C-terminus, leading to their ubiquitination and degradation. The CRL2(KLHDC10) complex is involved in the ribosome-associated quality control (RQC) pathway, which mediates the extraction of incompletely synthesized nascent chains from stalled ribosomes: CRL2(KLHDC10) acts downstream of NEMF and recognizes CAT tails associated with stalled nascent chains, leading to their ubiquitination and degradation. The protein is Kelch domain-containing protein 10 of Xenopus tropicalis (Western clawed frog).